We begin with the raw amino-acid sequence, 132 residues long: Glycine cleavage system H protein (132 aa).

Residues 24-107 (TATIGLSAFA…GEEGWLIKVR (84 aa)) enclose the Lipoyl-binding domain. Position 65 is an N6-lipoyllysine (Lys-65).

This sequence belongs to the GcvH family. The glycine cleavage system is composed of four proteins: P, T, L and H. Requires (R)-lipoate as cofactor.

Its function is as follows. The glycine cleavage system catalyzes the degradation of glycine. The H protein shuttles the methylamine group of glycine from the P protein to the T protein. The chain is Glycine cleavage system H protein from Synechocystis sp. (strain ATCC 27184 / PCC 6803 / Kazusa).